Reading from the N-terminus, the 687-residue chain is Pre-mRNA-splicing factor CLF1 (687 aa).

HAT repeat units follow at residues 45–77 (EYQR…FEIE), 79–111 (HDMR…AELK), 113–145 (KCIN…VEES), 147–178 (NNVE…FEIR), 180–211 (KNWN…FENR), 213–247 (GNTE…AKLV), 251–283 (AHWE…LKAG), 300–332 (TISY…LISE), 337–369 (QIMQ…LWMR), 383–416 (LEEE…FLIR), 451–483 (KEFD…LEEN), 525–557 (QEFE…YQTS), and 629–661 (LDQE…YIFP).

The protein belongs to the crooked-neck family. In terms of assembly, belongs to the NTC complex (or PRP19-associated complex), composed of at least CEF1, CLF1, ISY1, NTC20, SNT309, SYF1, SYF2, and PRP19. The NTC complex associates with the spliceosome after the release of the U1 and U4 snRNAs and forms the CWC spliceosome subcomplex (or CEF1-associated complex) reminiscent of a late-stage spliceosome composed also of the U2, U5 and U6 snRNAs and at least BUD13, BUD31, BRR2, CDC40, CUS1, CWC2, CWC15, CWC21, CWC22, CWC23, CWC24, CWC25, CWC27, ECM2, HSH155, IST3, LEA1, MSL1, PRP8, PRP9, PRP11, PRP21, PRP22, PRP45, PRP46, SLU7, SMB1, SMD1, SMD2, SMD3, SMX2, SMX3, SNU114, SPP2, RSE1 and YJU2. Interacts with CEF1, ISY1, MUD2, NTC20, PRP22, PRP40, PRP46, SYF1, SYF2, and the ORC2 subunit of the origin recognition complex.

The protein resides in the nucleus. Involved in pre-mRNA splicing and cell cycle progression. Required for the spliceosome assembly by promoting the functional integration of the U4/U6.U5 tri-snRNP particle into the U1-, U2-dependent pre-spliceosome. Also recruits PRP19 to the spliceosome, as a component of the NTC complex (or PRP19-associated complex). The association of the NTC complex to the spliceosome mediates conformational rearrangement or stabilizes the structure of the spliceosome after U4 snRNA dissociation, which leads to spliceosome maturation. Required for initiation of the DNA replication by binding the RNA replication origins, probably through its interaction with the origin recognition complex (ORC). In Saccharomyces cerevisiae (strain ATCC 204508 / S288c) (Baker's yeast), this protein is Pre-mRNA-splicing factor CLF1 (CLF1).